The sequence spans 209 residues: Probable GTP-binding protein EngB (209 aa).

Residues 27–201 (SGVEIAFAGR…ATKLDSWFAE (175 aa)) form the EngB-type G domain. GTP contacts are provided by residues 35–42 (GRSNAGKS), 62–66 (GRTQL), 80–83 (DLPG), 147–150 (TKAD), and 180–182 (YSA). Mg(2+)-binding residues include Ser42 and Thr64.

Belongs to the TRAFAC class TrmE-Era-EngA-EngB-Septin-like GTPase superfamily. EngB GTPase family. The cofactor is Mg(2+).

Functionally, necessary for normal cell division and for the maintenance of normal septation. In Glaesserella parasuis serovar 5 (strain SH0165) (Haemophilus parasuis), this protein is Probable GTP-binding protein EngB.